The primary structure comprises 334 residues: uncharacterized protein (334 aa).

WD repeat units follow at residues 56-86, 98-128, 139-169, 220-250, and 262-291; these read LKGE…KLWT, KPVA…RIWD, GHTS…EGWS, TDQG…RVFN, and LDDG…RVWN.

This is an uncharacterized protein from Synechocystis sp. (strain ATCC 27184 / PCC 6803 / Kazusa).